The primary structure comprises 226 residues: DNA mismatch repair protein MutH (226 aa).

Belongs to the MutH family.

The protein localises to the cytoplasm. Its function is as follows. Sequence-specific endonuclease that cleaves unmethylated GATC sequences. It is involved in DNA mismatch repair. The sequence is that of DNA mismatch repair protein MutH from Actinobacillus pleuropneumoniae serotype 3 (strain JL03).